Reading from the N-terminus, the 92-residue chain is Small ribosomal subunit protein uS19 (92 aa).

Belongs to the universal ribosomal protein uS19 family.

Protein S19 forms a complex with S13 that binds strongly to the 16S ribosomal RNA. This Sulfurovum sp. (strain NBC37-1) protein is Small ribosomal subunit protein uS19.